Consider the following 605-residue polypeptide: UvrABC system protein C (605 aa).

The GIY-YIG domain occupies 14–92 (QSCGVYKMIG…IKSLKPSYNI (79 aa)). A UVR domain is found at 202–237 (KEVQRQLFSTMEKCSREMNYELAAVYRDRLKFLQQI).

It belongs to the UvrC family. As to quaternary structure, interacts with UvrB in an incision complex.

It is found in the cytoplasm. Its function is as follows. The UvrABC repair system catalyzes the recognition and processing of DNA lesions. UvrC both incises the 5' and 3' sides of the lesion. The N-terminal half is responsible for the 3' incision and the C-terminal half is responsible for the 5' incision. The chain is UvrABC system protein C from Wolbachia pipientis subsp. Culex pipiens (strain wPip).